Reading from the N-terminus, the 199-residue chain is Recombination protein RecR (199 aa).

The segment at 57 to 72 (CTVCGHITDIDPCAIC) adopts a C4-type zinc-finger fold. Residues 80 to 176 (TVVCVVQDSR…RVTRLAHGLP (97 aa)) form the Toprim domain.

The protein belongs to the RecR family.

Its function is as follows. May play a role in DNA repair. It seems to be involved in an RecBC-independent recombinational process of DNA repair. It may act with RecF and RecO. This is Recombination protein RecR from Exiguobacterium sp. (strain ATCC BAA-1283 / AT1b).